The primary structure comprises 716 residues: 1,4-alpha-glucan branching enzyme GlgB (716 aa).

The Nucleophile role is filled by Asp394. Catalysis depends on Glu447, which acts as the Proton donor.

Belongs to the glycosyl hydrolase 13 family. GlgB subfamily. As to quaternary structure, monomer.

It carries out the reaction Transfers a segment of a (1-&gt;4)-alpha-D-glucan chain to a primary hydroxy group in a similar glucan chain.. The protein operates within glycan biosynthesis; glycogen biosynthesis. Catalyzes the formation of the alpha-1,6-glucosidic linkages in glycogen by scission of a 1,4-alpha-linked oligosaccharide from growing alpha-1,4-glucan chains and the subsequent attachment of the oligosaccharide to the alpha-1,6 position. This chain is 1,4-alpha-glucan branching enzyme GlgB, found in Photobacterium profundum (strain SS9).